We begin with the raw amino-acid sequence, 213 residues long: Flagellar transcriptional regulator FlhC (213 aa).

Zn(2+) contacts are provided by Cys138, Cys141, Cys158, and Cys161.

The protein belongs to the FlhC family. As to quaternary structure, heterohexamer composed of two FlhC and four FlhD subunits. Each FlhC binds a FlhD dimer, forming a heterotrimer, and a hexamer assembles by dimerization of two heterotrimers. Zn(2+) is required as a cofactor.

It is found in the cytoplasm. In terms of biological role, functions in complex with FlhD as a master transcriptional regulator that regulates transcription of several flagellar and non-flagellar operons by binding to their promoter region. Activates expression of class 2 flagellar genes, including fliA, which is a flagellum-specific sigma factor that turns on the class 3 genes. Also regulates genes whose products function in a variety of physiological pathways. The polypeptide is Flagellar transcriptional regulator FlhC (Cupriavidus metallidurans (strain ATCC 43123 / DSM 2839 / NBRC 102507 / CH34) (Ralstonia metallidurans)).